Here is a 481-residue protein sequence, read N- to C-terminus: ATP synthase subunit beta (481 aa).

Residue 154–161 (GGAGVGKT) participates in ATP binding.

The protein belongs to the ATPase alpha/beta chains family. F-type ATPases have 2 components, CF(1) - the catalytic core - and CF(0) - the membrane proton channel. CF(1) has five subunits: alpha(3), beta(3), gamma(1), delta(1), epsilon(1). CF(0) has three main subunits: a(1), b(2) and c(9-12). The alpha and beta chains form an alternating ring which encloses part of the gamma chain. CF(1) is attached to CF(0) by a central stalk formed by the gamma and epsilon chains, while a peripheral stalk is formed by the delta and b chains.

It localises to the cell inner membrane. It catalyses the reaction ATP + H2O + 4 H(+)(in) = ADP + phosphate + 5 H(+)(out). Produces ATP from ADP in the presence of a proton gradient across the membrane. The catalytic sites are hosted primarily by the beta subunits. The protein is ATP synthase subunit beta of Novosphingobium aromaticivorans (strain ATCC 700278 / DSM 12444 / CCUG 56034 / CIP 105152 / NBRC 16084 / F199).